The sequence spans 166 residues: Sec-independent protein translocase protein TatB (166 aa).

A helical membrane pass occupies residues 2–22 (FDGIGFMELLLIGVLGLVVLG). Residues 69-166 (SKGLSNLSPE…DTRSNPKANG (98 aa)) are disordered. Polar residues-rich tracts occupy residues 88 to 97 (QAAQSVNRPY) and 112 to 132 (QIHS…SQAN). Over residues 133–153 (PTATVEASPTSASPATPSEPS) the composition is skewed to low complexity. The span at 155 to 166 (GADTRSNPKANG) shows a compositional bias: polar residues.

Belongs to the TatB family. As to quaternary structure, the Tat system comprises two distinct complexes: a TatABC complex, containing multiple copies of TatA, TatB and TatC subunits, and a separate TatA complex, containing only TatA subunits. Substrates initially bind to the TatABC complex, which probably triggers association of the separate TatA complex to form the active translocon.

It localises to the cell inner membrane. Part of the twin-arginine translocation (Tat) system that transports large folded proteins containing a characteristic twin-arginine motif in their signal peptide across membranes. Together with TatC, TatB is part of a receptor directly interacting with Tat signal peptides. TatB may form an oligomeric binding site that transiently accommodates folded Tat precursor proteins before their translocation. The chain is Sec-independent protein translocase protein TatB from Shewanella baltica (strain OS223).